Reading from the N-terminus, the 228-residue chain is L-ribulose-5-phosphate 4-epimerase UlaF (228 aa).

Substrate-binding positions include 26–27 (GN), 43–44 (SG), and 72–73 (SS). Positions 74, 93, and 95 each coordinate Zn(2+). The active-site Proton donor/acceptor is Asp-118. His-167 contacts Zn(2+). The active-site Proton donor/acceptor is the Tyr-225.

This sequence belongs to the aldolase class II family. AraD/FucA subfamily. It depends on Zn(2+) as a cofactor.

The enzyme catalyses L-ribulose 5-phosphate = D-xylulose 5-phosphate. It participates in cofactor degradation; L-ascorbate degradation; D-xylulose 5-phosphate from L-ascorbate: step 4/4. Its function is as follows. Catalyzes the isomerization of L-ribulose 5-phosphate to D-xylulose 5-phosphate. Is involved in the anaerobic L-ascorbate utilization. This is L-ribulose-5-phosphate 4-epimerase UlaF from Shigella boydii serotype 18 (strain CDC 3083-94 / BS512).